Here is a 276-residue protein sequence, read N- to C-terminus: Large ribosomal subunit protein uL2 (276 aa).

Residues Ala-224–Gly-276 are disordered. Over residues Lys-254–Lys-270 the composition is skewed to basic residues.

Belongs to the universal ribosomal protein uL2 family. As to quaternary structure, part of the 50S ribosomal subunit. Forms a bridge to the 30S subunit in the 70S ribosome.

One of the primary rRNA binding proteins. Required for association of the 30S and 50S subunits to form the 70S ribosome, for tRNA binding and peptide bond formation. It has been suggested to have peptidyltransferase activity; this is somewhat controversial. Makes several contacts with the 16S rRNA in the 70S ribosome. The chain is Large ribosomal subunit protein uL2 from Ehrlichia chaffeensis (strain ATCC CRL-10679 / Arkansas).